The chain runs to 266 residues: Phosphatidylglycerol--prolipoprotein diacylglyceryl transferase (266 aa).

7 consecutive transmembrane segments (helical) span residues 10-30 (VALA…LIGI), 56-76 (LVFW…VLFY), 92-112 (WKGG…VWWF), 120-140 (FFQL…AGRI), 171-191 (PSQL…LWLF), 199-219 (ASVS…VEFV), and 233-253 (WLTM…ALMV). A 1,2-diacyl-sn-glycero-3-phospho-(1'-sn-glycerol) is bound at residue Arg139.

It belongs to the Lgt family.

It localises to the cell inner membrane. The catalysed reaction is L-cysteinyl-[prolipoprotein] + a 1,2-diacyl-sn-glycero-3-phospho-(1'-sn-glycerol) = an S-1,2-diacyl-sn-glyceryl-L-cysteinyl-[prolipoprotein] + sn-glycerol 1-phosphate + H(+). The protein operates within protein modification; lipoprotein biosynthesis (diacylglyceryl transfer). Its function is as follows. Catalyzes the transfer of the diacylglyceryl group from phosphatidylglycerol to the sulfhydryl group of the N-terminal cysteine of a prolipoprotein, the first step in the formation of mature lipoproteins. This chain is Phosphatidylglycerol--prolipoprotein diacylglyceryl transferase, found in Pseudomonas aeruginosa (strain LESB58).